The sequence spans 402 residues: Homoserine O-acetyltransferase (402 aa).

One can recognise an AB hydrolase-1 domain in the interval Asn38–Pro359. Residue Ser146 is the Nucleophile of the active site. Arg217 lines the substrate pocket. Active-site residues include Asp319 and His352. Asp353 contributes to the substrate binding site.

The protein belongs to the AB hydrolase superfamily. MetX family. Homodimer.

It localises to the cytoplasm. It catalyses the reaction L-homoserine + acetyl-CoA = O-acetyl-L-homoserine + CoA. The protein operates within amino-acid biosynthesis; L-methionine biosynthesis via de novo pathway; O-acetyl-L-homoserine from L-homoserine: step 1/1. In terms of biological role, transfers an acetyl group from acetyl-CoA to L-homoserine, forming acetyl-L-homoserine. In Haloarcula marismortui (strain ATCC 43049 / DSM 3752 / JCM 8966 / VKM B-1809) (Halobacterium marismortui), this protein is Homoserine O-acetyltransferase.